The following is a 91-amino-acid chain: Ragulator complex protein LAMTOR5 (91 aa).

It belongs to the LAMTOR5 family. As to quaternary structure, part of the Ragulator complex composed of lamtor1, lamtor2, lamtor3, lamtor4 and lamtor5. The Ragulator complex interacts with slc38a9; the probable amino acid sensor. Component of the lysosomal folliculin complex (LFC).

The protein localises to the cytoplasm. It localises to the lysosome. In terms of biological role, as part of the Ragulator complex it is involved in amino acid sensing and activation of mTORC1, a signaling complex promoting cell growth in response to growth factors, energy levels, and amino acids. Activated by amino acids through a mechanism involving the lysosomal V-ATPase, the Ragulator plays a dual role for the small GTPases Rag (RagA/RRAGA, RagB/RRAGB, RagC/RRAGC and/or RagD/RRAGD): it (1) acts as a guanine nucleotide exchange factor (GEF), activating the small GTPases Rag and (2) mediates recruitment of Rag GTPases to the lysosome membrane. Activated Ragulator and Rag GTPases function as a scaffold recruiting mTORC1 to lysosomes where it is in turn activated. This is Ragulator complex protein LAMTOR5 (lamtor5) from Xenopus tropicalis (Western clawed frog).